Consider the following 178-residue polypeptide: Ribulose bisphosphate carboxylase small subunit, chloroplastic (178 aa).

The transit peptide at 1-54 directs the protein to the chloroplast; that stretch reads MASSMISSPAVTTVNRAGAGTVAPFTGLKSMAGFPTRKTNNDIASIASNGGRVQ.

The protein belongs to the RuBisCO small chain family. Heterohexadecamer of 8 large and 8 small subunits.

The protein localises to the plastid. It localises to the chloroplast. Functionally, ruBisCO catalyzes two reactions: the carboxylation of D-ribulose 1,5-bisphosphate, the primary event in carbon dioxide fixation, as well as the oxidative fragmentation of the pentose substrate. Both reactions occur simultaneously and in competition at the same active site. Although the small subunit is not catalytic it is essential for maximal activity. The sequence is that of Ribulose bisphosphate carboxylase small subunit, chloroplastic from Glycine tomentella (Woolly glycine).